We begin with the raw amino-acid sequence, 333 residues long: Protoheme IX farnesyltransferase (333 aa).

7 consecutive transmembrane segments (helical) span residues leucine 64–leucine 84, threonine 110–valine 130, leucine 133–leucine 153, isoleucine 161–glycine 181, tryptophan 189–leucine 209, isoleucine 246–phenylalanine 266, and alanine 287–isoleucine 307.

This sequence belongs to the UbiA prenyltransferase family. Protoheme IX farnesyltransferase subfamily.

It is found in the cell inner membrane. It carries out the reaction heme b + (2E,6E)-farnesyl diphosphate + H2O = Fe(II)-heme o + diphosphate. It participates in porphyrin-containing compound metabolism; heme O biosynthesis; heme O from protoheme: step 1/1. Functionally, converts heme B (protoheme IX) to heme O by substitution of the vinyl group on carbon 2 of heme B porphyrin ring with a hydroxyethyl farnesyl side group. The polypeptide is Protoheme IX farnesyltransferase (Prochlorococcus marinus (strain AS9601)).